Here is a 414-residue protein sequence, read N- to C-terminus: Phospholipase A1-IIbeta (414 aa).

A Glycyl lysine isopeptide (Lys-Gly) (interchain with G-Cter in ubiquitin) cross-link involves residue Lys-19. Positions 191 to 217 form a coiled coil; sequence DKTSAQEQVQEELKRLLELYKNEDVTI. The active-site Acyl-ester intermediate is Ser-223. Catalysis depends on charge relay system residues Ser-223, Asp-289, and His-326. The tract at residues 386 to 414 is disordered; the sequence is DGTWKLNGDRSKKKQEEEDEKEENNCKFP. Residues 390–410 adopt a coiled-coil conformation; it reads KLNGDRSKKKQEEEDEKEENN. Positions 392–401 are enriched in basic and acidic residues; it reads NGDRSKKKQE.

This sequence belongs to the AB hydrolase superfamily. Lipase family.

It is found in the cytoplasm. Functionally, acylhydrolase that catalyzes the hydrolysis of phospholipids at the sn-1 position. The polypeptide is Phospholipase A1-IIbeta (Arabidopsis thaliana (Mouse-ear cress)).